Here is a 466-residue protein sequence, read N- to C-terminus: Ribulose bisphosphate carboxylase large chain (466 aa).

Lys-5 bears the N6,N6,N6-trimethyllysine mark. Residues Asn-114 and Thr-164 each contribute to the substrate site. Lys-166 (proton acceptor) is an active-site residue. Lys-168 is a substrate binding site. Mg(2+) contacts are provided by Lys-192, Asp-194, and Glu-195. Position 192 is an N6-carboxylysine (Lys-192). His-285 acts as the Proton acceptor in catalysis. The substrate site is built by Arg-286, His-318, and Ser-370.

The protein belongs to the RuBisCO large chain family. Type I subfamily. Heterohexadecamer of 8 large chains and 8 small chains. It depends on Mg(2+) as a cofactor.

It is found in the plastid. The protein localises to the chloroplast. It catalyses the reaction 2 (2R)-3-phosphoglycerate + 2 H(+) = D-ribulose 1,5-bisphosphate + CO2 + H2O. It carries out the reaction D-ribulose 1,5-bisphosphate + O2 = 2-phosphoglycolate + (2R)-3-phosphoglycerate + 2 H(+). Its function is as follows. RuBisCO catalyzes two reactions: the carboxylation of D-ribulose 1,5-bisphosphate, the primary event in carbon dioxide fixation, as well as the oxidative fragmentation of the pentose substrate in the photorespiration process. Both reactions occur simultaneously and in competition at the same active site. This Lobelia sp protein is Ribulose bisphosphate carboxylase large chain.